Consider the following 171-residue polypeptide: Translation initiation factor IF-3 (171 aa).

It belongs to the IF-3 family. As to quaternary structure, monomer.

The protein localises to the cytoplasm. IF-3 binds to the 30S ribosomal subunit and shifts the equilibrium between 70S ribosomes and their 50S and 30S subunits in favor of the free subunits, thus enhancing the availability of 30S subunits on which protein synthesis initiation begins. The chain is Translation initiation factor IF-3 from Halalkalibacterium halodurans (strain ATCC BAA-125 / DSM 18197 / FERM 7344 / JCM 9153 / C-125) (Bacillus halodurans).